The following is a 272-amino-acid chain: tRNA pseudouridine synthase A (272 aa).

Residue aspartate 52 is the Nucleophile of the active site. Tyrosine 110 serves as a coordination point for substrate.

The protein belongs to the tRNA pseudouridine synthase TruA family. As to quaternary structure, homodimer.

It carries out the reaction uridine(38/39/40) in tRNA = pseudouridine(38/39/40) in tRNA. Functionally, formation of pseudouridine at positions 38, 39 and 40 in the anticodon stem and loop of transfer RNAs. The sequence is that of tRNA pseudouridine synthase A from Cupriavidus taiwanensis (strain DSM 17343 / BCRC 17206 / CCUG 44338 / CIP 107171 / LMG 19424 / R1) (Ralstonia taiwanensis (strain LMG 19424)).